A 143-amino-acid chain; its full sequence is Large ribosomal subunit protein uL15 (143 aa).

The disordered stretch occupies residues 1–56; the sequence is MELNSIKPAEGSKHAKRRVGRGIGSGLGKTAGRGHKGQKSRSGGYHKVGFEGGQMP. The span at 21-31 shows a compositional bias: gly residues; that stretch reads RGIGSGLGKTA.

This sequence belongs to the universal ribosomal protein uL15 family. Part of the 50S ribosomal subunit.

Functionally, binds to the 23S rRNA. The protein is Large ribosomal subunit protein uL15 of Delftia acidovorans (strain DSM 14801 / SPH-1).